A 244-amino-acid chain; its full sequence is Myosin-7 (244 aa).

The rodlike tail (S2 and LMM domains) stretch occupies residues 1 to 244; sequence VEQTERSRKL…DIGTKGLNEE (244 aa). Positions 1–244 form a coiled coil; the sequence is VEQTERSRKL…DIGTKGLNEE (244 aa). The interval 216–244 is disordered; that stretch reads EERADIAESQVNKLRAKSRDIGTKGLNEE. Residues 232–244 show a composition bias toward basic and acidic residues; it reads KSRDIGTKGLNEE.

Muscle myosin is a hexameric protein that consists of 2 heavy chain subunits (MHC), 2 alkali light chain subunits (MLC) and 2 regulatory light chain subunits (MLC-2). Interacts with ECPAS. Interacts (via C-terminus) with LRRC39.

The protein localises to the cytoplasm. It is found in the myofibril. It localises to the sarcomere. Functionally, myosins are actin-based motor molecules with ATPase activity essential for muscle contraction. Forms regular bipolar thick filaments that, together with actin thin filaments, constitute the fundamental contractile unit of skeletal and cardiac muscle. In Papio hamadryas (Hamadryas baboon), this protein is Myosin-7 (MYH7).